The sequence spans 93 residues: Small ribosomal subunit protein uS19 (93 aa).

This sequence belongs to the universal ribosomal protein uS19 family.

In terms of biological role, protein S19 forms a complex with S13 that binds strongly to the 16S ribosomal RNA. This chain is Small ribosomal subunit protein uS19, found in Geobacter sulfurreducens (strain ATCC 51573 / DSM 12127 / PCA).